A 387-amino-acid polypeptide reads, in one-letter code: Phosphoglycerate kinase (387 aa).

Substrate is bound by residues 21–23, R36, 59–62, R113, and R146; these read DLN and HLGR. ATP-binding positions include K197, E314, and 340–343; that span reads GGDT.

The protein belongs to the phosphoglycerate kinase family. Monomer.

It is found in the cytoplasm. It catalyses the reaction (2R)-3-phosphoglycerate + ATP = (2R)-3-phospho-glyceroyl phosphate + ADP. Its pathway is carbohydrate degradation; glycolysis; pyruvate from D-glyceraldehyde 3-phosphate: step 2/5. This chain is Phosphoglycerate kinase, found in Pseudomonas putida (strain ATCC 700007 / DSM 6899 / JCM 31910 / BCRC 17059 / LMG 24140 / F1).